A 119-amino-acid chain; its full sequence is Large ribosomal subunit protein bL19 (119 aa).

This sequence belongs to the bacterial ribosomal protein bL19 family.

Its function is as follows. This protein is located at the 30S-50S ribosomal subunit interface and may play a role in the structure and function of the aminoacyl-tRNA binding site. The sequence is that of Large ribosomal subunit protein bL19 from Pediococcus pentosaceus (strain ATCC 25745 / CCUG 21536 / LMG 10740 / 183-1w).